Here is a 337-residue protein sequence, read N- to C-terminus: Protein ABHD13 (337 aa).

Residues 37–57 traverse the membrane as a helical; Signal-anchor for type II membrane protein segment; that stretch reads FHLYGGIILLLLIFISIAGIL. Active-site charge relay system residues include S193, D268, and H298. Residue N299 is glycosylated (N-linked (GlcNAc...) asparagine).

This sequence belongs to the serine esterase family.

Its subcellular location is the membrane. The chain is Protein ABHD13 from Homo sapiens (Human).